The chain runs to 712 residues: MMRNRSKSPRRPSPTSRAANCDVDLLKSTARDREELKCMLEKYERHLAEIQGNVKVLTSVRDKTFLLYEQAQEEIARLRREMMKSCQSPKSTTAHAILRRVETERDVAFTDLRRMTTARDSLRERLKIAQAFNEKAHLEQRIEELECTVHNLDDERMEQMSNMTLMKETITIVEKEMKSLARKAMDTESELGRQKAENNSLRLLYENTEKDLSDTQRHLAKKKYELQLTQEKIMCLDEKIDNFTRQNIAQREEISILGATLNDLAKEKECLQTCLDKKSENIASLGESLAMKEKTISGMKNIIAEMEQASRQSTEALIMCEQDISRMRRQLDETNDELGQIARERDILAHENDNLQEQFAKVKQENQALSKKLNDTHNELSDIKQKVQDTNLEVNKLKNILKSEESTNLEVNKLKNILKSEESENRQIMEQLRKANEDAENWENKARQLEAENNTLKLELITAEAEGNRLKEKVDALNREVEQHLNAERSYKSQIATLHKSLVKMEEELQKVQFEKVSALADLSSTRELCIKLDSSKELLNRQLVAKDQEIEMMENELDSARSEIELLRSQMTNERISMQNLEALLVANRDKEYQSQIALQEKESEIQLLKEHLCLAENKMAIQSRDVAQFRNVVTQLEADLDITKRQLGTERFERERAVQELRRQNYSSNAYHLGSMKPNTKCHSPERAHHRSPDRDLDRSLEENLCYRDF.

Ser-161 is modified (phosphoserine). The segment at 571–703 (QMTNERISMQ…SPDRDLDRSL (133 aa)) is interaction with HIF1A. The interval 673-699 (YHLGSMKPNTKCHSPERAHHRSPDRDL) is disordered. The segment covering 685 to 699 (HSPERAHHRSPDRDL) has biased composition (basic and acidic residues). Ser-702 bears the Phosphoserine mark.

It belongs to the CEP135/TSGA10 family. As to quaternary structure, interacts with HIF1A. In terms of processing, processed into N-terminal 27-kDa and C-terminal 55-kDa fragments. In terms of tissue distribution, expressed in testis, predominantly in elongated spermatids (at protein level). Detected in spermatocytes only at the mRNA, but not at the protein level.

Its subcellular location is the cytoplasm. The protein resides in the cytoskeleton. It localises to the microtubule organizing center. The protein localises to the centrosome. It is found in the centriole. In terms of biological role, plays a role in spermatogenesis. When overexpressed, prevents nuclear localization of HIF1A. The sequence is that of Testis-specific gene 10 protein (Tsga10) from Rattus norvegicus (Rat).